A 316-amino-acid chain; its full sequence is Glutathione synthetase (316 aa).

The ATP-grasp domain maps to 125 to 310 (KLFTAWFSDL…ITGMLMDAIE (186 aa)). Position 151–207 (151–207 (WEKHSDIILKPLDGMGGASIFRVKEGDPNLGVIAETLTEHGTCYCMAQNYLPAIKDG)) interacts with ATP. The Mg(2+) site is built by glutamate 281 and asparagine 283.

The protein belongs to the prokaryotic GSH synthase family. Requires Mg(2+) as cofactor. The cofactor is Mn(2+).

It catalyses the reaction gamma-L-glutamyl-L-cysteine + glycine + ATP = glutathione + ADP + phosphate + H(+). It functions in the pathway sulfur metabolism; glutathione biosynthesis; glutathione from L-cysteine and L-glutamate: step 2/2. The protein is Glutathione synthetase of Shigella flexneri.